A 194-amino-acid chain; its full sequence is MFLVDWFYNMFLWLGFFKKEAKIVIIGLGNAGKTTLLHLLVTGSLKSHIPTLRPNAESFTYGNVNFKAYDLGGQQNLRFLWKQYVPDSKTIIVFMVDSSDYNSIIESKSEIHDILGDEHLSQSPLLILGSKCDAKGHHNRENLIDLLDIRRFELGLNNSNNVPFDLIMTSSITRYGITDMLNWLDKCTDIIKNN.

Positions 2–4 (FLV) match the STAR; SAR1-N-terminal activation recruitment. Required for the activation and subsequent recruitment to ER membrane motif. The tract at residues 10–14 (MFLWL) is mediates recruitment to ER membranes. GDP-binding residues include N30, A31, G32, K33, T34, and T35. N30 lines the GTP pocket. The GTP site is built by G32, K33, T34, and T35. D70 serves as a coordination point for Mg(2+). GDP contacts are provided by K131, D133, and I172. GTP contacts are provided by K131, D133, and I172.

This sequence belongs to the small GTPase superfamily. SAR1 family. Homodimer; upon association with membrane. Part of the coat protein complex II/COPII, composed of SEC23/24 and SEC13/31 heterodimers, that it helps recruit and assemble on endoplasmic reticulum (ER) membranes at ER exit sites.

Its subcellular location is the endoplasmic reticulum membrane. It localises to the golgi apparatus. The protein resides in the golgi stack membrane. The protein localises to the cytoplasm. It is found in the cytosol. It catalyses the reaction GTP + H2O = GDP + phosphate + H(+). Small GTPases activation is mediated by guanine exchange factors (GEF), while inactivation through hydrolysis of the bound GTP is stimulated by GTPase activating proteins (GAP). In terms of biological role, small GTPase that cycles between an active GTP-bound and an inactive GDP-bound state and mainly functions in vesicle-mediated endoplasmic reticulum (ER) to Golgi transport. The active GTP-bound form inserts into the endoplasmic reticulum membrane where it recruits the remainder of the coat protein complex II/COPII. The coat protein complex II assembling and polymerizing on endoplasmic reticulum membrane is responsible for both the sorting of cargos and the deformation and budding of membranes into vesicles destined to the Golgi. This Dictyostelium discoideum (Social amoeba) protein is Small COPII coat GTPase SAR1B (sarB).